The following is a 171-amino-acid chain: Co-chaperone protein HscB homolog (171 aa).

Residues 2–74 (NHFELFGLPS…ISRAEYILAE (73 aa)) form the J domain.

Belongs to the HscB family. As to quaternary structure, interacts with HscA and stimulates its ATPase activity.

Co-chaperone involved in the maturation of iron-sulfur cluster-containing proteins. Seems to help targeting proteins to be folded toward HscA. The sequence is that of Co-chaperone protein HscB homolog from Vibrio campbellii (strain ATCC BAA-1116).